The primary structure comprises 371 residues: Cytoplasmic dynein intermediate light chain DYN3 (371 aa).

Belongs to the dynein light intermediate chain DYN3 family. The cytoplasmic dynein is composed of at least two heavy chains and a number of intermediate and light chains.

Its subcellular location is the cytoplasm. It localises to the cytoskeleton. In terms of biological role, component of the cytoplasmic dynein which acts as a motor for the intracellular retrograde motility of vesicles and organelles along microtubules. May play an important role in the proper orientation of the mitotic spindle into the budding daughter cell yeast. Probably required for normal progression of the cell cycle. The chain is Cytoplasmic dynein intermediate light chain DYN3 (DYN3) from Eremothecium gossypii (strain ATCC 10895 / CBS 109.51 / FGSC 9923 / NRRL Y-1056) (Yeast).